The chain runs to 976 residues: R3H domain-containing protein 2 (976 aa).

Disordered regions lie at residues 32–71 (ISKT…AKSN) and 105–147 (ISCP…QEYT). The segment covering 36 to 56 (PSKEEIEKECEDTSLRQETQR) has biased composition (basic and acidic residues). At Ser37 the chain carries Phosphoserine. Residues 58–71 (TSNHGHARKRAKSN) show a composition bias toward basic residues. Positions 109 to 143 (SDKEEEKSTKDVSEKEDKDKNKEKIPRKMLSRDSS) are enriched in basic and acidic residues. Ser143 is subject to Phosphoserine. The region spanning 169–232 (RMMLLKLEQE…AVIINKTSNT (64 aa)) is the R3H domain. Residues 233-310 (RIPEQRFSEH…NREGLSRTSS (78 aa)) enclose the SUZ domain. Residues 257–269 (LKRDDASMDRDDN) are compositionally biased toward basic and acidic residues. Disordered regions lie at residues 257-376 (LKRD…ISRP), 401-457 (CTAQ…EAAD), 480-560 (ASTG…PGLQ), 661-725 (GTSP…PSMV), and 738-780 (RGQK…SLSS). The span at 306 to 317 (SRTSSSRQSSTD) shows a compositional bias: low complexity. Phosphoserine is present on residues Ser330, Ser333, and Ser349. Residues 401-415 (CTAQQQQQQQQQQLP) are compositionally biased toward low complexity. 2 stretches are compositionally biased toward polar residues: residues 441–453 (PFGQ…QGST) and 480–504 (ASTG…QQVL). The span at 543–560 (SPQRGQQLPQPSQQPGLQ) shows a compositional bias: low complexity. Residues 682–691 (SPSPCSPPQM) show a composition bias toward pro residues. Residues 692 to 714 (PQQYSGVSPSGPGVVVMQLNVPN) are compositionally biased toward low complexity. Over residues 748–758 (PDSSPQANTQM) the composition is skewed to polar residues. A compositionally biased stretch (low complexity) spans 759–777 (SSSPVTSPTQSPAPSPVTS). 2 positions are modified to phosphoserine: Ser853 and Ser855. Thr856 and Thr860 each carry phosphothreonine.

Its subcellular location is the nucleus. The polypeptide is R3H domain-containing protein 2 (R3HDM2) (Homo sapiens (Human)).